The primary structure comprises 146 residues: Single-stranded DNA-binding protein, mitochondrial (146 aa).

The transit peptide at 1–16 (MLRNASAQILKQFVRH) directs the protein to the mitochondrion. The SSB domain maps to 29-140 (INKVQILGRV…IIADNIVFLS (112 aa)).

Its subcellular location is the mitochondrion. It is found in the mitochondrion matrix. The protein resides in the mitochondrion nucleoid. Binds preferentially and cooperatively to pyrimidine rich single-stranded DNA (ss-DNA). May be required to maintain the copy number of mitochondrial DNA (mtDNA) and play a crucial role during mtDNA replication. Required for retinal ganglion cell differentiation and retinal integrity. The chain is Single-stranded DNA-binding protein, mitochondrial from Danio rerio (Zebrafish).